A 325-amino-acid polypeptide reads, in one-letter code: Brain mitochondrial carrier protein 1 (325 aa).

6 helical membrane-spanning segments follow: residues 38 to 54 (GLNW…SIVA), 112 to 128 (LRQA…YQSL), 145 to 165 (MICG…TDVL), 199 to 215 (GVVP…GVEL), 240 to 256 (VSSF…SNPV), and 298 to 315 (GFWP…IFFI). Solcar repeat units follow at residues 42-131 (KPFV…LKRL), 139-224 (ETLL…TKKH), and 233-323 (DTIL…LKRL).

Belongs to the mitochondrial carrier (TC 2.A.29) family. Homotetramer. In terms of tissue distribution, mainly expressed in brain, particularly abundant in cortex, hippocampus thalamus, amygdala and hypothalamus. Highly expressed in heart and kidney, but not liver or lung (at protein level). In the nervous system, expressed in cortex, basal ganglia, substantia nigra, cerebellum, and spinal cord (at protein level).

The protein resides in the mitochondrion inner membrane. It catalyses the reaction sulfite(in) + sulfate(out) = sulfite(out) + sulfate(in). The enzyme catalyses thiosulfate(in) + sulfate(out) = thiosulfate(out) + sulfate(in). The catalysed reaction is sulfate(out) + phosphate(in) = sulfate(in) + phosphate(out). It carries out the reaction oxalate(in) + sulfate(out) = oxalate(out) + sulfate(in). It catalyses the reaction malonate(in) + sulfate(out) = malonate(out) + sulfate(in). The enzyme catalyses maleate(in) + sulfate(out) = maleate(out) + sulfate(in). The catalysed reaction is (S)-malate(in) + sulfate(out) = (S)-malate(out) + sulfate(in). It carries out the reaction (3S)-citramalate(in) + sulfate(out) = (3S)-citramalate(out) + sulfate(in). It catalyses the reaction (3R)-citramalate(in) + sulfate(out) = (3R)-citramalate(out) + sulfate(in). The enzyme catalyses sulfate(out) + succinate(in) = sulfate(in) + succinate(out). The catalysed reaction is (S,S)-tartrate(in) + sulfate(out) = (S,S)-tartrate(out) + sulfate(in). It carries out the reaction (2R,3R)-tartrate(in) + sulfate(out) = (2R,3R)-tartrate(out) + sulfate(in). It catalyses the reaction D-aspartate(in) + sulfate(out) = D-aspartate(out) + sulfate(in). The enzyme catalyses L-aspartate(in) + sulfate(out) = L-aspartate(out) + sulfate(in). The catalysed reaction is sulfate(in) = sulfate(out). It carries out the reaction phosphate(in) = phosphate(out). It catalyses the reaction (S)-malate(out) = (S)-malate(in). The enzyme catalyses citrate(in) = citrate(out). The catalysed reaction is L-aspartate(out) = L-aspartate(in). It carries out the reaction L-glutamate(out) = L-glutamate(in). It catalyses the reaction H(+)(in) = H(+)(out). The enzyme catalyses chloride(in) = chloride(out). In terms of biological role, transports inorganic anions (sulfate, sulfite, thiosulfate and phosphate) and, to a lesser extent, a variety of dicarboxylates (e.g. malonate, malate and citramalate) and, even more so, aspartate and glutamate and tricarboxylates. May catalyze the export of sulfite and thiosulfate (the hydrogen sulfide degradation products) from the mitochondria, thereby modulating the level of the hydrogen sulfide. Also can mediate a very low unidirectional transport of anions including sulfate, phosphate, (S)-malate, citrate, L-aspartate and L-glutamate. Maintains oxidative balance (through uncoupling activities) and ATP production (by modifying mitochondrial membrane potential). Is able to transport protons across lipid membranes. Also exhibits transmembrane chloride transport activity to a lesser extent. May modify mitochondrial respiratory efficiency and mitochondrial oxidant production. The sequence is that of Brain mitochondrial carrier protein 1 from Mus musculus (Mouse).